Reading from the N-terminus, the 386-residue chain is Lycopene beta-cyclase (386 aa).

3–33 is an NAD(+) binding site; the sequence is DLILVGGGLANGLIAWRLRQRYPQLNLLLIE.

This sequence belongs to the lycopene cyclase family. FAD is required as a cofactor.

It carries out the reaction a carotenoid psi-end group = a carotenoid beta-end derivative. The enzyme catalyses all-trans-lycopene = gamma-carotene. It catalyses the reaction gamma-carotene = all-trans-beta-carotene. It functions in the pathway carotenoid biosynthesis; beta-carotene biosynthesis. In terms of biological role, catalyzes the double cyclization reaction which converts lycopene to beta-carotene. The chain is Lycopene beta-cyclase from Pseudescherichia vulneris (Escherichia vulneris).